The sequence spans 306 residues: Arginase (306 aa).

Mn(2+) is bound by residues H96, D123, H125, and D127. Substrate-binding positions include 125–129 (HTDFH), 136–138 (SGN), and D178. Mn(2+) contacts are provided by D226 and D228. Substrate-binding residues include T240 and E271.

Belongs to the arginase family. It depends on Mn(2+) as a cofactor.

The catalysed reaction is L-arginine + H2O = urea + L-ornithine. It participates in nitrogen metabolism; urea cycle; L-ornithine and urea from L-arginine: step 1/1. The protein is Arginase (arcB) of Brucella abortus biovar 1 (strain 9-941).